Consider the following 337-residue polypeptide: Cytoskeleton protein RodZ (337 aa).

The Cytoplasmic segment spans residues Met1 to Gly111. Residues Leu19–Leu71 form the HTH cro/C1-type domain. Residues Gln30–Glu49 constitute a DNA-binding region (H-T-H motif). The helical; Signal-anchor for type II membrane protein transmembrane segment at Trp112–Trp132 threads the bilayer. At Trp133–Gln337 the chain is on the periplasmic side. The disordered stretch occupies residues Asn155–Ala220. Residues Ser160 to Val192 show a composition bias toward polar residues. Residues Pro193–Pro217 show a composition bias toward low complexity.

It belongs to the RodZ family.

The protein localises to the cell inner membrane. Its function is as follows. Cytoskeletal protein that is involved in cell-shape control through regulation of the length of the long axis. The polypeptide is Cytoskeleton protein RodZ (Citrobacter koseri (strain ATCC BAA-895 / CDC 4225-83 / SGSC4696)).